Here is a 786-residue protein sequence, read N- to C-terminus: Keratin, type I cytoskeletal 9 (786 aa).

A disordered region spans residues 1-21 (MNCRQFLSSHCSRDSSGGGGG). Residues 1-136 (MNCRQFLSSH…SGAGGILGAD (136 aa)) form a head region. Position 52 is a phosphoserine (S52). A coil 1A region spans residues 137–172 (EKTTMQDLNSRLASYLDKVQALEDANKELESKIREW). The region spanning 137-449 (EKTTMQDLNS…SLLEGGQEDF (313 aa)) is the IF rod domain. Positions 173-191 (YDKQGSRTFHRDYSPYYDT) are linker 1. The coil 1B stretch occupies residues 192 to 283 (IEDLKNQIVN…KNHEDEMSQL (92 aa)). The interval 284–306 (TGQNSGDVNVEMNAAPGRDLTKI) is linker 12. Residues 307–445 (LNDMREEYER…KTYRSLLEGG (139 aa)) form a coil 2 region. The tract at residues 446 to 760 (QEDFESHESG…GGGSGSKGGS (315 aa)) is tail. Residues 447–786 (EDFESHESGQ…DDTQGYHIQY (340 aa)) are disordered. Gly residues-rich tracts occupy residues 460–657 (GSGG…GGSG) and 664–761 (SSSG…GGSG). Residues 762 to 773 (RSSQVQSSSSKS) are compositionally biased toward low complexity.

This sequence belongs to the intermediate filament family. In terms of assembly, heterotetramer of two type I and two type II keratins.

In terms of biological role, may serve an important special function either in the mature palmar and plantar skin tissue or in the morphogenetic program of the formation of these tissues. Plays a role in keratin filament assembly. The chain is Keratin, type I cytoskeletal 9 from Canis lupus familiaris (Dog).